The following is a 136-amino-acid chain: 2-hydroxyisobutanoyl-CoA mutase small subunit (136 aa).

In terms of domain architecture, B12-binding spans 5-133 (PIRVLLAKVG…DSIRSLVAAR (129 aa)). H18 is a binding site for adenosylcob(III)alamin.

The protein belongs to the acyl-CoA mutase small subunit family. Homotetramer composed of two large substrate-binding subunits (HcmA) and two small cobalamin-binding subunits (HcmB). It depends on adenosylcob(III)alamin as a cofactor.

It carries out the reaction 2-hydroxyisobutanoyl-CoA = (3S)-3-hydroxybutanoyl-CoA. Its function is as follows. Together with HcmA, catalyzes the isomerization of 2-hydroxyisobutyryl-CoA and 3-hydroxybutyryl-CoA. Is specific for 2-hydroxyisobutyryl-CoA and (S)-3-hydroxybutyryl-CoA, and shows only very low activity with (R)-3-hydroxybutyryl-CoA, isobutyryl-CoA and butyryl-CoA. In vitro, can isomerize pivalyl-CoA and isovaleryl-CoA, with much lower efficiency. Plays a central role in the degradation of substrates bearing a tert-butyl moiety, such as the fuel oxygenate methyl tert-butyl ether (MTBE) and its metabolites. The chain is 2-hydroxyisobutanoyl-CoA mutase small subunit from Aquincola tertiaricarbonis.